Reading from the N-terminus, the 241-residue chain is Probable transcriptional regulatory protein AZOSEA20720 (241 aa).

Residues 1–21 (MAGHSKWANIQHRKGRQDAKR) form a disordered region.

This sequence belongs to the TACO1 family.

The protein localises to the cytoplasm. The chain is Probable transcriptional regulatory protein AZOSEA20720 from Aromatoleum aromaticum (strain DSM 19018 / LMG 30748 / EbN1) (Azoarcus sp. (strain EbN1)).